The following is a 488-amino-acid chain: Probable apyrase 5 (488 aa).

Residues Met1 to Lys26 form a disordered region. Topologically, residues Met1–Lys32 are cytoplasmic. Residues Pro10–Met21 are compositionally biased toward polar residues. Residues Ser33 to Ser53 form a helical; Signal-anchor for type II membrane protein membrane-spanning segment. At Ser54–Lys488 the chain is on the extracellular side. Val73 to Arg83 provides a ligand contact to ATP. The active-site Proton acceptor is the Glu196. Gly220 to Gln230 provides a ligand contact to ATP. N-linked (GlcNAc...) asparagine glycosylation occurs at Asn251.

It belongs to the GDA1/CD39 NTPase family. Ca(2+) is required as a cofactor. As to expression, highly expressed in young rosette leaves but only weakly in roots.

The protein localises to the membrane. The enzyme catalyses a ribonucleoside 5'-triphosphate + 2 H2O = a ribonucleoside 5'-phosphate + 2 phosphate + 2 H(+). Functionally, catalyzes the hydrolysis of phosphoanhydride bonds of nucleoside tri- and di-phosphates. This chain is Probable apyrase 5 (APY5), found in Arabidopsis thaliana (Mouse-ear cress).